A 177-amino-acid chain; its full sequence is Large ribosomal subunit protein uL6 (177 aa).

The protein belongs to the universal ribosomal protein uL6 family. As to quaternary structure, part of the 50S ribosomal subunit.

In terms of biological role, this protein binds to the 23S rRNA, and is important in its secondary structure. It is located near the subunit interface in the base of the L7/L12 stalk, and near the tRNA binding site of the peptidyltransferase center. The sequence is that of Large ribosomal subunit protein uL6 from Ruegeria pomeroyi (strain ATCC 700808 / DSM 15171 / DSS-3) (Silicibacter pomeroyi).